The primary structure comprises 166 residues: Transcriptional repressor NrdR (166 aa).

A zinc finger lies at Cys-3 to Cys-34. Residues Leu-49–Ala-139 form the ATP-cone domain. The tract at residues Asp-146–Pro-166 is disordered.

The protein belongs to the NrdR family. Zn(2+) is required as a cofactor.

Its function is as follows. Negatively regulates transcription of bacterial ribonucleotide reductase nrd genes and operons by binding to NrdR-boxes. The protein is Transcriptional repressor NrdR of Gluconobacter oxydans (strain 621H) (Gluconobacter suboxydans).